The primary structure comprises 172 residues: 3-phenylpropionate/cinnamic acid dioxygenase subunit beta (172 aa).

This sequence belongs to the bacterial ring-hydroxylating dioxygenase beta subunit family. In terms of assembly, this dioxygenase system consists of four proteins: the two subunits of the hydroxylase component (HcaE and HcaF), a ferredoxin (HcaC) and a ferredoxin reductase (HcaD).

It catalyses the reaction 3-phenylpropanoate + NADH + O2 + H(+) = 3-(cis-5,6-dihydroxycyclohexa-1,3-dien-1-yl)propanoate + NAD(+). The catalysed reaction is (E)-cinnamate + NADH + O2 + H(+) = (2E)-3-(cis-5,6-dihydroxycyclohexa-1,3-dien-1-yl)prop-2-enoate + NAD(+). It functions in the pathway aromatic compound metabolism; 3-phenylpropanoate degradation. Part of the multicomponent 3-phenylpropionate dioxygenase. Converts 3-phenylpropionic acid (PP) and cinnamic acid (CI) into 3-phenylpropionate-dihydrodiol (PP-dihydrodiol) and cinnamic acid-dihydrodiol (CI-dihydrodiol), respectively. The protein is 3-phenylpropionate/cinnamic acid dioxygenase subunit beta of Escherichia coli O7:K1 (strain IAI39 / ExPEC).